Here is a 328-residue protein sequence, read N- to C-terminus: Delta-aminolevulinic acid dehydratase (328 aa).

Residues Cys-122, Cys-124, and Cys-132 each contribute to the Zn(2+) site. The Schiff-base intermediate with substrate role is filled by Lys-197. Residues Arg-207 and Arg-219 each coordinate 5-aminolevulinate. Residue Glu-235 coordinates Mg(2+). Lys-250 acts as the Schiff-base intermediate with substrate in catalysis. 5-aminolevulinate is bound by residues Ser-276 and Tyr-315.

This sequence belongs to the ALAD family. As to quaternary structure, homooctamer. Zn(2+) serves as cofactor.

The catalysed reaction is 2 5-aminolevulinate = porphobilinogen + 2 H2O + H(+). It functions in the pathway porphyrin-containing compound metabolism; protoporphyrin-IX biosynthesis; coproporphyrinogen-III from 5-aminolevulinate: step 1/4. In terms of biological role, catalyzes an early step in the biosynthesis of tetrapyrroles. Binds two molecules of 5-aminolevulinate per subunit, each at a distinct site, and catalyzes their condensation to form porphobilinogen. This chain is Delta-aminolevulinic acid dehydratase (hemB), found in Halalkalibacterium halodurans (strain ATCC BAA-125 / DSM 18197 / FERM 7344 / JCM 9153 / C-125) (Bacillus halodurans).